We begin with the raw amino-acid sequence, 137 residues long: Putative nickel-responsive regulator (137 aa).

Residues H79, H90, H92, and C98 each coordinate Ni(2+).

The protein belongs to the transcriptional regulatory CopG/NikR family. The cofactor is Ni(2+).

In terms of biological role, transcriptional regulator. This chain is Putative nickel-responsive regulator, found in Campylobacter concisus (strain 13826).